A 434-amino-acid chain; its full sequence is Bestrophin homolog 12 (434 aa).

4 helical membrane passes run 31–51 (KVIL…FLVF), 76–96 (VCIP…DQWE), 244–264 (IPIP…YFFF), and 278–298 (WALS…FLVG).

The protein belongs to the anion channel-forming bestrophin (TC 1.A.46) family. Calcium-sensitive chloride channel subfamily. As to quaternary structure, forms oligomers.

Its subcellular location is the cell membrane. Forms chloride channels. The chain is Bestrophin homolog 12 (best-12) from Caenorhabditis elegans.